The sequence spans 483 residues: ATP-dependent RNA helicase DDX25 (483 aa).

A Q motif motif is present at residues 97–125 (KSFEELHLKNELLRGIYAMGFNRPSKIQE). Residues 130-300 (MMLADPPQNL…ERIVPDPNII (171 aa)) enclose the Helicase ATP-binding domain. 143-150 (SQSGTGKT) provides a ligand contact to ATP. A DEAD box motif is present at residues 247–250 (DEAD). The 168-residue stretch at 311-478 (NIQQFYDQCE…KLNSMDMDEM (168 aa)) folds into the Helicase C-terminal domain.

The protein belongs to the DEAD box helicase family. An mRNA component of germ plasm. Localizes to the granulo-fibrillar material (GFM) of the mitochondrial cloud in stage I oocytes. Associated, at a low level, with the periphery of mature germinal granules in later stage oocytes. Localizes to the vegetal cortex in stage II oocytes and segregates with germ plasm during early embryogenesis. In adults, expression is restricted to the ovary and, at a lower level, to spermatogonia, spermatocytes and spermatids of the testis.

It is found in the cytoplasm. The protein localises to the nucleus. The catalysed reaction is ATP + H2O = ADP + phosphate + H(+). In terms of biological role, ATP-dependent RNA helicase. The chain is ATP-dependent RNA helicase DDX25 from Xenopus laevis (African clawed frog).